The primary structure comprises 172 residues: Large ribosomal subunit protein uL10 (172 aa).

The protein belongs to the universal ribosomal protein uL10 family. In terms of assembly, part of the ribosomal stalk of the 50S ribosomal subunit. The N-terminus interacts with L11 and the large rRNA to form the base of the stalk. The C-terminus forms an elongated spine to which L12 dimers bind in a sequential fashion forming a multimeric L10(L12)X complex.

Forms part of the ribosomal stalk, playing a central role in the interaction of the ribosome with GTP-bound translation factors. The protein is Large ribosomal subunit protein uL10 of Bradyrhizobium sp. (strain ORS 278).